The following is a 310-amino-acid chain: MWSEYSLEVVDAVARNGSFSAAAQELHRVPSAVSYTVRQLEEWLAVPLFERRHRDVELTAAGAWFLKEGRSVVKKMQITRQQCQQIANGWRGQLAIAVDNIVRPERTRQMIVDFYRHFDDVELLVFQEVFNGVWDALSDGRVELAIGATRAIPVGGRYAFRDMGMLSWSCVVASHHPLALMDGPFSDDTLRNWPSLVREDTSRTLPKRITWLLDNQKRVVVPDWESSATCISAGLCIGMVPTHFAKPWLNEGKWVALELENPFPDSACCLTWQQNDMSPALTWLLEYLGDSETLNKEWLREPEETPATGD.

Residues Trp-2–Thr-59 enclose the HTH lysR-type domain. The segment at residues Phe-19–Arg-38 is a DNA-binding region (H-T-H motif).

The protein belongs to the LysR transcriptional regulatory family.

It is found in the cytoplasm. Functionally, transcriptional regulator that activates the expression of punC, which encodes a purine nucleoside transporter. This Escherichia coli O157:H7 protein is HTH-type transcriptional regulator PunR.